The primary structure comprises 286 residues: Putative L-ribulose-5-phosphate 3-epimerase SgbU (286 aa).

Belongs to the L-ribulose-5-phosphate 3-epimerase family.

The enzyme catalyses L-ribulose 5-phosphate = L-xylulose 5-phosphate. In terms of biological role, catalyzes the isomerization of L-xylulose-5-phosphate to L-ribulose-5-phosphate. The sequence is that of Putative L-ribulose-5-phosphate 3-epimerase SgbU (sgbU) from Haemophilus influenzae (strain ATCC 51907 / DSM 11121 / KW20 / Rd).